The primary structure comprises 176 residues: DNA-directed RNA polymerase II subunit 7 (176 aa).

This sequence belongs to the eukaryotic RPB7/RPC8 RNA polymerase subunit family. Component of the RNA polymerase II complex consisting of at least 12 subunits. Interacts with NRPB4.

The protein localises to the nucleus. In terms of biological role, DNA-dependent RNA polymerase catalyzes the transcription of DNA into RNA using the four ribonucleoside triphosphates as substrates. Component of RNA polymerase II which synthesizes mRNA precursors and many functional non-coding RNAs. Pol II is the central component of the basal RNA polymerase II transcription machinery. It is composed of mobile elements that move relative to each other. NRPB7 is part of a subcomplex with NRPB4 that binds to a pocket formed by NRPB1, NRPB2 and NRPB6 at the base of the clamp element. The NRBP4-NRPB7 subcomplex seems to lock the clamp via NRPB7 in the closed conformation thus preventing double-stranded DNA to enter the active site cleft. The NRPB4-NRPB7 subcomplex binds single-stranded DNA and RNA. The chain is DNA-directed RNA polymerase II subunit 7 (NRPB7) from Arabidopsis thaliana (Mouse-ear cress).